Reading from the N-terminus, the 223-residue chain is Neurotrophic factor BDNF precursor form (223 aa).

The signal sequence occupies residues 1-5 (SCMKA). The propeptide occupies 6 to 114 (APMKEVSIRG…AANMSMRVRR (109 aa)). N-linked (GlcNAc...) asparagine glycosylation occurs at asparagine 107. Intrachain disulfides connect cysteine 127–cysteine 194 and cysteine 172–cysteine 223.

Belongs to the NGF-beta family.

The protein resides in the secreted. Promotes the survival of neuronal populations that are all located either in the central nervous system or directly connected to it. This is Neurotrophic factor BDNF precursor form (BDNF) from Candoia carinata (Papuan tree boa).